Consider the following 768-residue polypeptide: Valine--tRNA ligase (768 aa).

A 'HIGH' region motif is present at residues 37 to 47 (PTVSGKMHMGH). The 'KMSKS' region signature appears at 510 to 514 (KMSKS). Position 513 (Lys513) interacts with ATP.

Belongs to the class-I aminoacyl-tRNA synthetase family. ValS type 2 subfamily.

It localises to the cytoplasm. The enzyme catalyses tRNA(Val) + L-valine + ATP = L-valyl-tRNA(Val) + AMP + diphosphate. Functionally, catalyzes the attachment of valine to tRNA(Val). As ValRS can inadvertently accommodate and process structurally similar amino acids such as threonine, to avoid such errors, it has a 'posttransfer' editing activity that hydrolyzes mischarged Thr-tRNA(Val) in a tRNA-dependent manner. This Picrophilus torridus (strain ATCC 700027 / DSM 9790 / JCM 10055 / NBRC 100828 / KAW 2/3) protein is Valine--tRNA ligase.